The sequence spans 1079 residues: DNA ligase 4 (1079 aa).

Positions 1–20 (MAVHAPYNHAPPPTQEINGQ) are disordered. ATP-binding residues include Glu295, Lys297, Leu298, Arg302, Glu357, Phe395, Glu460, Lys465, Lys482, and Lys484. Lys297 (N6-AMP-lysine intermediate) is an active-site residue. Position 357 (Glu357) interacts with Mg(2+). A Mg(2+)-binding site is contributed by Glu460. Positions 699-789 (VETSIFSDMT…TALPFLKEFL (91 aa)) constitute a BRCT 1 domain. A compositionally biased stretch (acidic residues) spans 838-847 (DGEDKDEIDV). The tract at residues 838–942 (DGEDKDEIDV…SDVGVNGDDY (105 aa)) is disordered. Composition is skewed to basic and acidic residues over residues 848–878 (EESR…KKLQ) and 900–914 (MSLK…ERSR). One can recognise a BRCT 2 domain in the interval 968–1078 (DEDRIFYHLA…TLLDEDLYKP (111 aa)).

This sequence belongs to the ATP-dependent DNA ligase family. It depends on Mg(2+) as a cofactor.

The protein resides in the nucleus. It carries out the reaction ATP + (deoxyribonucleotide)n-3'-hydroxyl + 5'-phospho-(deoxyribonucleotide)m = (deoxyribonucleotide)n+m + AMP + diphosphate.. In terms of biological role, DNA ligase involved in DNA non-homologous end joining (NHEJ); required for double-strand break (DSB) repair. The protein is DNA ligase 4 (LIG4) of Cryptococcus neoformans var. neoformans serotype D (strain JEC21 / ATCC MYA-565) (Filobasidiella neoformans).